Consider the following 131-residue polypeptide: Small ribosomal subunit protein uS11 (131 aa).

This sequence belongs to the universal ribosomal protein uS11 family. As to quaternary structure, part of the 30S ribosomal subunit. Interacts with proteins S7 and S18. Binds to IF-3.

Functionally, located on the platform of the 30S subunit, it bridges several disparate RNA helices of the 16S rRNA. Forms part of the Shine-Dalgarno cleft in the 70S ribosome. This is Small ribosomal subunit protein uS11 from Clostridium acetobutylicum (strain ATCC 824 / DSM 792 / JCM 1419 / IAM 19013 / LMG 5710 / NBRC 13948 / NRRL B-527 / VKM B-1787 / 2291 / W).